Consider the following 222-residue polypeptide: Putative O-methyltransferase MAP_2558 (222 aa).

S-adenosyl-L-methionine contacts are provided by residues V49, E71, 73–74, S79, D97, and I98; that span reads GT. Residue D145 participates in substrate binding. D147 lines the S-adenosyl-L-methionine pocket.

This sequence belongs to the class I-like SAM-binding methyltransferase superfamily. Cation-dependent O-methyltransferase family.

This is Putative O-methyltransferase MAP_2558 from Mycolicibacterium paratuberculosis (strain ATCC BAA-968 / K-10) (Mycobacterium paratuberculosis).